The chain runs to 283 residues: uncharacterized protein (283 aa).

3 consecutive transmembrane segments (helical) span residues 24–44, 64–84, and 96–116; these read LFGY…GMFI, TIAG…TLIA, and VIAI…GSLS.

It belongs to the MscS (TC 1.A.23) family.

It localises to the cell membrane. This is an uncharacterized protein from Buchnera aphidicola subsp. Schizaphis graminum (strain Sg).